Reading from the N-terminus, the 70-residue chain is Large ribosomal subunit protein bL31 (70 aa).

Zn(2+)-binding residues include Cys-16, Cys-18, Cys-37, and Cys-40.

It belongs to the bacterial ribosomal protein bL31 family. Type A subfamily. As to quaternary structure, part of the 50S ribosomal subunit. It depends on Zn(2+) as a cofactor.

Binds the 23S rRNA. The protein is Large ribosomal subunit protein bL31 of Shewanella sp. (strain MR-4).